A 213-amino-acid chain; its full sequence is Probable nicotinate-nucleotide adenylyltransferase (213 aa).

This sequence belongs to the NadD family.

The enzyme catalyses nicotinate beta-D-ribonucleotide + ATP + H(+) = deamido-NAD(+) + diphosphate. It functions in the pathway cofactor biosynthesis; NAD(+) biosynthesis; deamido-NAD(+) from nicotinate D-ribonucleotide: step 1/1. In terms of biological role, catalyzes the reversible adenylation of nicotinate mononucleotide (NaMN) to nicotinic acid adenine dinucleotide (NaAD). The chain is Probable nicotinate-nucleotide adenylyltransferase from Shigella boydii serotype 18 (strain CDC 3083-94 / BS512).